Reading from the N-terminus, the 173-residue chain is MMRAFYIGRFQPYHFGHHAVITRIAEEVDELVIGIGSAQKSHEATDPFTAGERVLMLYNALENLPVRHYVLPIEDVRYNSIWVHHVASRTPRFDVVYSNNPLVIQLFREAGFCVKESPLYVRERYSGTEIRRRMIAGEKWEHLVPKPVAETIKDIDGITRLRNVSASDSNFSL.

This sequence belongs to the archaeal NMN adenylyltransferase family.

The protein localises to the cytoplasm. The catalysed reaction is beta-nicotinamide D-ribonucleotide + ATP + H(+) = diphosphate + NAD(+). It functions in the pathway cofactor biosynthesis; NAD(+) biosynthesis; NAD(+) from nicotinamide D-ribonucleotide: step 1/1. This is Nicotinamide-nucleotide adenylyltransferase from Methanosarcina acetivorans (strain ATCC 35395 / DSM 2834 / JCM 12185 / C2A).